Consider the following 262-residue polypeptide: Granzyme A (262 aa).

The signal sequence occupies residues 1–26 (MRNSYRFLASSLSVVVSLLLIPEDVC). The propeptide at 27 to 28 (EK) is activation peptide. The region spanning 29-259 (IIGGNEVTPH…HLNWIIMTIK (231 aa)) is the Peptidase S1 domain. The cysteines at positions 54 and 70 are disulfide-linked. Catalysis depends on charge relay system residues histidine 69 and aspartate 114. Cystine bridges form between cysteine 148–cysteine 218, cysteine 179–cysteine 197, and cysteine 208–cysteine 234. Asparagine 170 is a glycosylation site (N-linked (GlcNAc...) asparagine). The active-site Charge relay system is serine 212.

Belongs to the peptidase S1 family. Granzyme subfamily. In terms of assembly, homodimer; disulfide-linked. Interacts with APEX1.

Its subcellular location is the secreted. It localises to the cytoplasmic granule. It carries out the reaction Hydrolysis of proteins, including fibronectin, type IV collagen and nucleolin. Preferential cleavage: -Arg-|-Xaa-, -Lys-|-Xaa- &gt;&gt; -Phe-|-Xaa- in small molecule substrates.. In terms of biological role, abundant protease in the cytosolic granules of cytotoxic T-cells and NK-cells which activates caspase-independent pyroptosis when delivered into the target cell through the immunological synapse. It cleaves after Lys or Arg. Once delivered into the target cell, acts by catalyzing cleavage of gasdermin-B (GSDMB), releasing the pore-forming moiety of GSDMB, thereby triggering pyroptosis and target cell death. Cleaves APEX1 after 'Lys-31' and destroys its oxidative repair activity. Cleaves the nucleosome assembly protein SET after 'Lys-189', which disrupts its nucleosome assembly activity and allows the SET complex to translocate into the nucleus to nick and degrade the DNA. This Homo sapiens (Human) protein is Granzyme A.